The sequence spans 299 residues: Taste receptor type 2 member 4 (299 aa).

Over 1-9 (MLRLFYFSA) the chain is Extracellular. A helical membrane pass occupies residues 10–30 (VIASVILNFVGIIMNLFITVV). Over 31-46 (NCKTWVKSHRISSSDR) the chain is Cytoplasmic. A helical membrane pass occupies residues 47–67 (ILFSLGITRFLMLGLFLVNTI). Over 68 to 81 (YFVSSNMERSVYLS) the chain is Extracellular. A helical membrane pass occupies residues 82–102 (AFFVLCFMFLDSSSLWFVTLL). At 103 to 131 (NILYCVKITNFQHSVFLLLKRSISPKIPR) the chain is on the cytoplasmic side. The helical transmembrane segment at 132 to 152 (LLLAFVLISAFTTCLYITLSQ) threads the bilayer. The Extracellular portion of the chain corresponds to 153 to 172 (ASPFPELVTTRNNTSFNISE). N-linked (GlcNAc...) asparagine glycans are attached at residues Asn-164, Asn-165, and Asn-169. Residues 173-193 (GILSLVVSLVLSSSLQFIINV) traverse the membrane as a helical segment. Topologically, residues 194 to 230 (TSASLLIHSLRRHIQKMQKNATGFWNPQMEAHVGAMK) are cytoplasmic. The helical transmembrane segment at 231–251 (LMVYFLILYIPYSVATLVQYL) threads the bilayer. Residues 252-262 (PFYAGMDMGTK) lie on the Extracellular side of the membrane. Residues 263–283 (SICLIFATLYSPGHSVLIIIT) traverse the membrane as a helical segment. Residues 284-299 (HPKLKTTAKKILCFKK) lie on the Cytoplasmic side of the membrane.

The protein belongs to the G-protein coupled receptor T2R family.

It localises to the membrane. The protein resides in the cell projection. It is found in the cilium membrane. Gustducin-coupled receptor implicated in the perception of bitter compounds in the oral cavity and the gastrointestinal tract. Signals through PLCB2 and the calcium-regulated cation channel TRPM5. In airway epithelial cells, binding of denatonium increases the intracellular calcium ion concentration and stimulates ciliary beat frequency. The chain is Taste receptor type 2 member 4 (TAS2R4) from Gorilla gorilla gorilla (Western lowland gorilla).